Reading from the N-terminus, the 549-residue chain is Polycomb group RING finger protein 3 homolog mig-32 (549 aa).

Positions 1–263 (MTRKRPALAE…EESMRQKYGQ (263 aa)) are disordered. A compositionally biased stretch (low complexity) spans 12–29 (VSSSRSRVTRRSTTGAPS). 2 stretches are compositionally biased toward acidic residues: residues 38-49 (PESDADSEDDYD) and 87-100 (MDDD…DGEV). Over residues 118-130 (KTAKLQTKKKKKK) the composition is skewed to basic residues. Pro residues predominate over residues 134–144 (PETPPTSPSPS). Low complexity predominate over residues 145-156 (PSRSVSPSTTKS). Over residues 205–235 (EEIKLRERAERKARRIEEAKNRPKLTIEQKL) the composition is skewed to basic and acidic residues. Residues 206–260 (EIKLRERAERKARRIEEAKNRPKLTIEQKLAKLRKKKERRERRKEQEKEESMRQK) adopt a coiled-coil conformation. Residues 236-247 (AKLRKKKERRER) are compositionally biased toward basic residues. The segment covering 248–258 (RKEQEKEESMR) has biased composition (basic and acidic residues). The RING-type zinc finger occupies 329–368 (CGICDGYIVDATTIIDCMHTFCKSCLLTYFESDNNTCPTC).

As to quaternary structure, component of a PRC1-like complex.

The protein localises to the nucleus. It is found in the nucleolus. Component of a Polycomb group (PcG) multiprotein PRC1-like complex, a complex class required to maintain the transcriptionally repressive state of many genes, throughout development. Required for ubiquitination of histone H2A. Plays a role in the formation of the male-specific genital sensilla (simple sense organs) known as rays. Required for normal migration of the hermaphrodite specific neurons (HSN) and for extension of some neuronal processes. Represses vulval fates in hypodermal cells that do not normally contribute to vulval development. This Caenorhabditis elegans protein is Polycomb group RING finger protein 3 homolog mig-32.